Here is a 537-residue protein sequence, read N- to C-terminus: Phenylalanine--tRNA ligase beta subunit (537 aa).

Residues phenylalanine 268–glutamate 343 enclose the B5 domain. Aspartate 321, aspartate 327, glutamate 330, and aspartate 331 together coordinate Mg(2+).

It belongs to the phenylalanyl-tRNA synthetase beta subunit family. Type 2 subfamily. As to quaternary structure, tetramer of two alpha and two beta subunits. Mg(2+) serves as cofactor.

Its subcellular location is the cytoplasm. The enzyme catalyses tRNA(Phe) + L-phenylalanine + ATP = L-phenylalanyl-tRNA(Phe) + AMP + diphosphate + H(+). This is Phenylalanine--tRNA ligase beta subunit from Thermoplasma volcanium (strain ATCC 51530 / DSM 4299 / JCM 9571 / NBRC 15438 / GSS1).